Reading from the N-terminus, the 616-residue chain is Matrix metalloproteinase-21 (616 aa).

The N-terminal stretch at 1 to 22 (MPTAPALGALLLLLGALTPGHQ) is a signal peptide. A propeptide spanning residues 23–192 (EKLFHSRDHS…TSTSKIRKKR (170 aa)) is cleaved from the precursor. Residues 139–146 (PRCGVPDN) carry the Cysteine switch motif. C141 provides a ligand contact to Zn(2+). Residues 157–186 (SNSNNVTEKASGKSLNTTTNQNPENGTSTS) are disordered. 3 N-linked (GlcNAc...) asparagine glycosylation sites follow: N161, N172, and N181. A Zn(2+)-binding site is contributed by H329. E330 is a catalytic residue. H333 and H339 together coordinate Zn(2+). C375 and C606 are disulfide-bonded. 4 Hemopexin repeats span residues 376–435 (EGSF…WHGI), 437–493 (AEGI…FPKI), 494–542 (PSPI…FPAV), and 549–605 (FGNI…WTDI). N-linked (GlcNAc...) asparagine glycosylation occurs at N418. An N-linked (GlcNAc...) asparagine glycan is attached at N597.

Belongs to the peptidase M10A family. The cofactor is Zn(2+). It depends on Ca(2+) as a cofactor. The precursor is cleaved by a furin endopeptidase.

It is found in the secreted. May play a role in gastrulation-related cell movement. Plays a specialized role in the generation of left-right asymmetry during embryogenesis. May act as a negative regulator of the NOTCH-signaling pathway. This chain is Matrix metalloproteinase-21 (MMP21), found in Cynops pyrrhogaster (Japanese fire-bellied newt).